A 349-amino-acid chain; its full sequence is MIEFDNLTYLHGKPQGTGLLKANPEDFVVVEDLGFEPDGEGEHILVRILKNGCNTRFVADALAKFLKIHAHEVSFAGQKDKHAVTEQWLCARVPGKEMPDLSAFQLEGCQVLEYARHKRKLRLGALKGNAFTLVLREVSNRDDVEQRLIDICVKGVPNYFGAQRFGIGGSNLQGALRWAQTNTPVRDRNKRSFWLSAARSALFNQIVAERLKKADVNQVVDGDALQLAGRGSWFVATTEELAELQHRVNDKELMITAALPGSGEWGTQREALAFEQAAVAAETELQALLVREKVEAARRAMLLYPQQLSWNWWDDVTVEIRFWLPAGSFATSVVRELINTTGDYAHIAE.

A substrate-binding site is contributed by Phe-27. Asp-80 functions as the Nucleophile in the catalytic mechanism. Asn-129 is a binding site for substrate. The region spanning 155–303 (GVPNYFGAQR…VEAARRAMLL (149 aa)) is the TRUD domain. A substrate-binding site is contributed by Phe-329.

Belongs to the pseudouridine synthase TruD family.

It catalyses the reaction uridine(13) in tRNA = pseudouridine(13) in tRNA. Responsible for synthesis of pseudouridine from uracil-13 in transfer RNAs. The sequence is that of tRNA pseudouridine synthase D from Shigella boydii serotype 18 (strain CDC 3083-94 / BS512).